A 315-amino-acid chain; its full sequence is Probable cytochrome c oxidase subunit 2 (315 aa).

The next 3 helical transmembrane spans lie at 54–74 (IALI…PLPW), 96–116 (LLYI…FVCI), and 133–153 (VLIE…IAVP). Cu cation is bound by residues His235, Cys270, Cys274, and His278.

Belongs to the cytochrome c oxidase subunit 2 family. Cu cation is required as a cofactor. It depends on heme as a cofactor.

It localises to the cell membrane. It catalyses the reaction 4 Fe(II)-[cytochrome c] + O2 + 8 H(+)(in) = 4 Fe(III)-[cytochrome c] + 2 H2O + 4 H(+)(out). Functionally, subunits I and II form the functional core of the enzyme complex. Electrons originating in cytochrome c are transferred via heme a and Cu(A) to the binuclear center formed by heme a3 and Cu(B). This is Probable cytochrome c oxidase subunit 2 (ctaC) from Rickettsia conorii (strain ATCC VR-613 / Malish 7).